Reading from the N-terminus, the 265-residue chain is Probable trehalose-phosphate phosphatase (265 aa).

Asp35 acts as the Nucleophile in catalysis. Positions 35, 37, and 213 each coordinate Mg(2+). Asp35–Asp37 is a binding site for substrate.

This sequence belongs to the trehalose phosphatase family. Mg(2+) serves as cofactor.

It catalyses the reaction alpha,alpha-trehalose 6-phosphate + H2O = alpha,alpha-trehalose + phosphate. The protein operates within glycan biosynthesis; trehalose biosynthesis. Removes the phosphate from trehalose 6-phosphate to produce free trehalose. This chain is Probable trehalose-phosphate phosphatase (otsB), found in Sinorhizobium fredii (strain NBRC 101917 / NGR234).